The following is a 250-amino-acid chain: Imidazole glycerol phosphate synthase subunit HisF (250 aa).

Active-site residues include Asp11 and Asp130.

It belongs to the HisA/HisF family. As to quaternary structure, heterodimer of HisH and HisF.

It localises to the cytoplasm. It catalyses the reaction 5-[(5-phospho-1-deoxy-D-ribulos-1-ylimino)methylamino]-1-(5-phospho-beta-D-ribosyl)imidazole-4-carboxamide + L-glutamine = D-erythro-1-(imidazol-4-yl)glycerol 3-phosphate + 5-amino-1-(5-phospho-beta-D-ribosyl)imidazole-4-carboxamide + L-glutamate + H(+). Its pathway is amino-acid biosynthesis; L-histidine biosynthesis; L-histidine from 5-phospho-alpha-D-ribose 1-diphosphate: step 5/9. In terms of biological role, IGPS catalyzes the conversion of PRFAR and glutamine to IGP, AICAR and glutamate. The HisF subunit catalyzes the cyclization activity that produces IGP and AICAR from PRFAR using the ammonia provided by the HisH subunit. The sequence is that of Imidazole glycerol phosphate synthase subunit HisF from Bacteroides fragilis (strain ATCC 25285 / DSM 2151 / CCUG 4856 / JCM 11019 / LMG 10263 / NCTC 9343 / Onslow / VPI 2553 / EN-2).